The primary structure comprises 555 residues: MQSCESSGDSADDPLSRGLRRRGQPRVVVIGAGLAGLAAARALLEQGFTDVTVLEASSHIGGRVQSVRLGDTTFELGATWIHGSHGNPIYQLAEANGLLEETTDGERSVGRISLYSKNGVACYLTNRGCRIPKDVVEEFSDLYNEVYNMTQEFFRHGKPVNAESQNSVGVFTREKVRNRIRDDPDDTEATKRLKLAMIQQYLKVESCESSSHSIDEVSLSAFGEWTEIPGAHHIIPSGFMRVVELLAEGIPPHVIQLGKPVRCIHWDQASAHPRGPEIEPRGEGDHNHDTGEGGQSGENPQQGRWDEDEPWPVVVECEDCEVIPADHVIVTVSLGVLKRQYTSFFRPCLPTEKVAAIHRLGIGTTDKIFLEFEEPFWGPECNSLQFVWEDEAESCTLTYPPELWYRKICGFDVLYPPERYGHVLSGWICGEEALVMERCDDEAVAEICTEMLRQFTGNPNIPKPRRILRSAWGSNPYFRGSYSYTQVGSSGADVEKLAKPLPYTESSKTAPMQVLFSGEATHRKYYSTTHGALLSGQREAARLIEMYRDLFQQGP.

Residues A35, E55, R63, 79 to 80 (TW), and V261 contribute to the FAD site. The tract at residues 271–307 (AHPRGPEIEPRGEGDHNHDTGEGGQSGENPQQGRWDE) is disordered. Over residues 274–291 (RGPEIEPRGEGDHNHDTG) the composition is skewed to basic and acidic residues. FAD is bound by residues E519 and 528 to 529 (TT).

It belongs to the flavin monoamine oxidase family. It depends on FAD as a cofactor. As to expression, widely expressed. Isoform 1 and isoform 2 are expressed at higher level in brain and skeletal muscle. Isoform 7 is found in brain and spleen, isoform 10 is widely expressed but found at lower level in heart, kidney, liver and lung.

The protein localises to the cytoplasm. It localises to the nucleus. The catalysed reaction is spermine + O2 + H2O = 3-aminopropanal + spermidine + H2O2. The protein operates within amine and polyamine degradation; spermine degradation. Its function is as follows. Flavoenzyme which catalyzes the oxidation of spermine to spermidine. Can also use N(1)-acetylspermine and spermidine as substrates, with different affinity depending on the isoform (isozyme) and on the experimental conditions. Plays an important role in the regulation of polyamine intracellular concentration and has the potential to act as a determinant of cellular sensitivity to the antitumor polyamine analogs. May contribute to beta-alanine production via aldehyde dehydrogenase conversion of 3-amino-propanal. In Mus musculus (Mouse), this protein is Spermine oxidase (Smox).